We begin with the raw amino-acid sequence, 339 residues long: AB hydrolase superfamily protein B1A11.02 (339 aa).

The protein belongs to the AB hydrolase superfamily.

This is AB hydrolase superfamily protein B1A11.02 from Schizosaccharomyces pombe (strain 972 / ATCC 24843) (Fission yeast).